Reading from the N-terminus, the 341-residue chain is Acetylpolyamine amidohydrolase (341 aa).

Substrate contacts are provided by Tyr-19, Glu-106, and Glu-117. His-159 functions as the Proton donor/acceptor in the catalytic mechanism. Zn(2+) is bound by residues Asp-195, His-197, and Asp-284. Tyr-323 serves as a coordination point for substrate.

It belongs to the histone deacetylase family. As to quaternary structure, homodimer. Zn(2+) is required as a cofactor.

It catalyses the reaction N-acetylputrescine + H2O = putrescine + acetate. The catalysed reaction is N-acetylcadaverine + H2O = cadaverine + acetate. The enzyme catalyses N(1)-acetylspermine + H2O = spermine + acetate. It carries out the reaction N(1)-acetylspermidine + H2O = spermidine + acetate. It catalyses the reaction N(8)-acetylspermidine + H2O = spermidine + acetate. Its pathway is amine and polyamine metabolism. With respect to regulation, zinc ions inhibit enzyme activity in a dose-dependent manner. Inhibited by KCl at concentrations above 10 mM. Inhibited by o-oxyquinoline in vitro, suggesting that it is a metalloprotein. Inhibited by various substrate N(8)-acetylspermidine analogs bearing different metal-binding groups such as trifluoromethylketone, thiol, or hydroxamate, and by hydroxamate analogs of short-chain acetyldiamines. In terms of biological role, involved in polyamine metabolism. Catalyzes the deacetylation of various acetylated polyamines such as N-acetylputrescine, N-acetylcadaverine, N(1)-acetylspermine, N(1)-acetylspermidine and N(8)-acetylspermidine. In vitro, is also able to deacetylate L-Lys(epsilon-acetyl)coumarin, but has very low activity towards the larger tetrapeptide N-acetyl-L-Arg-L-His-L-Lys(epsilon-acetyl)-L-Lys(epsilon-acetyl)coumarin. The sequence is that of Acetylpolyamine amidohydrolase from Mycoplana ramosa (Mycoplana bullata).